Consider the following 122-residue polypeptide: Large ribosomal subunit protein uL14 (122 aa).

Belongs to the universal ribosomal protein uL14 family. In terms of assembly, part of the 50S ribosomal subunit. Forms a cluster with proteins L3 and L19. In the 70S ribosome, L14 and L19 interact and together make contacts with the 16S rRNA in bridges B5 and B8.

Binds to 23S rRNA. Forms part of two intersubunit bridges in the 70S ribosome. This is Large ribosomal subunit protein uL14 from Fusobacterium nucleatum subsp. nucleatum (strain ATCC 25586 / DSM 15643 / BCRC 10681 / CIP 101130 / JCM 8532 / KCTC 2640 / LMG 13131 / VPI 4355).